The sequence spans 1571 residues: MPQFDESFLSDCALADRWHFYSYTVKQLPPHPSPKPNRNRNPYPSGASHDDHQHQLHHHHHQQHHHNHHRLWKTQRQSWSPRDTNNNHSLTSNNCNCNSSNTCNSISATGNTLHSIKFHRRRKYKKLARLALSTPAIPLQMDVDVDVNVTVDREFDMEMDTPVPLKNAVCHGSISSPSTPGTCSSGIGVGGGGCSSSSNNSINSGSYSTACTPPPPTHQHHSQHQQLQGTPGGSSRVGGAGAGGGGGVPPAPPSAGSSGHKNSLKGTKLARRARSFKDDLIEKISLMRTTNNTLGRSHSPHSPRTKHGTKAPPTTEEVLRSTQTLETHVKDISNALKHFRDVILKKKLEVLPGNGTVILETIASMYSVIQTYTLNENSAIMSSATLQVYQSLGKLIKLCDEVMLSEDSGECASLSNENVREVIDLLEDAVRNLVTLAQGKLKEQDQCAFRYSGSGLGGIGAAAEIMGAVTASPGASVPGTGVMRVSAAESAAQRTSLPDIALTPKERDILEQHNVNPMRGSHSTESILRDTSPPPKPPLPNRASNPPPLPPKRRSQPSASAGTVGVGCSSSTSTSNQASPLPYAQSHNISLNSDLDCSSNISLLNYGVDRLSVRSRSPDENSQCSFDSALNHSREEEDQQQQHQHLRSFPKLAAMMDEDMDKMVSYSAAIDDKTQTPLSTGGGIAGVAGGTGGAGEGVAAAASGDGETNSNRHSNESGFVSMREFRTSTQTTDYSVQSSTKSSSSNSEIAFSISESTAVGSSSEYQQISQLVSHSQRHISSSSSSCTTTTTSSSTTTGYGSSEVEQLQQQQQQQTTTTPADLAPALPPKSIQRSSLTRHDSPGVGDELDEVQSSSGWASHRSSQSEVAELRQLSPLHHLNHHPHTASAGQLQQWHSKHHSLIEGPRLQLAGSGSCSAFDQRHLDQEPPPLPIKKKHILAYMEICSASTRSIEQHRHTMHACNISRNISHSQTMNIMPMSKELSPELEMPPALPPKNYKQRKATSMVASPTLQPVIVTTPPPSPKPTLGENGSTGRPDSRMATVCEELNDAVASEDAMPEPRSPVLDSNENVSAVDDGQTFYCHSHQLPAAEMEMSEDASSADNQPITTPQVLEEQEEPTAESRPLVAVHESVKPANVDEDEEAERADMLINMLEEVNITRYLILKKREEDGPEVKGGYIDALIVHASRVQKVADNAFCEAFITTFRTFIQPIDVIEKLTHRYTYFFCQVQDNKQKAAKETFALLVRVVNDLTSTDLTSQLLSLLVEFVYQLVCSGQLYLAKLLRNKFVEKVTLYKEPKVYGFVGELGGAGSVGGAGIAGSGGCSGTAGGGNQPSLLDLKSLEIAEQMTLLDAELFTKIEIPEVLLFAKDQCEEKSPNLNKFTEHFNKMSYWARSKILRLQDAKEREKHVNKFIKIMKHLRKMNNYNSYLALLSALDSGPIRRLEWQKGITEEVRSFCALIDSSSSFRAYRQALAETNPPCIPYIGLILQDLTFVHVGNQDYLSKGVINFSKRWQQYNIIDNMKRFKKCAYPFRRNERIIRFFDNFKDFMGEEEMWQISEKIKPRGRRPVNY.

Disordered regions lie at residues 28–85 (LPPH…RDTN), 202–271 (INSG…KLAR), and 287–316 (MRTT…PTTE). The span at 55–73 (QLHHHHHQQHHHNHHRLWK) shows a compositional bias: basic residues. Over residues 74-83 (TQRQSWSPRD) the composition is skewed to polar residues. The segment covering 230–248 (TPGGSSRVGGAGAGGGGGV) has biased composition (gly residues). Polar residues predominate over residues 287 to 297 (MRTTNNTLGRS). Residues 298 to 309 (HSPHSPRTKHGT) are compositionally biased toward basic residues. 2 positions are modified to phosphoserine: Ser496 and Ser523. Disordered regions lie at residues 513–580 (HNVN…QASP), 614–646 (RSRS…HQHL), 695–719 (GEGV…ESGF), 728–747 (STQT…SSNS), 776–868 (QRHI…SEVA), and 879–898 (LNHH…HSKH). Residue Thr524 is modified to Phosphothreonine. Ser526 is subject to Phosphoserine. Positions 532 to 550 (SPPPKPPLPNRASNPPPLP) are enriched in pro residues. An SH3-binding motif is present at residues 546–556 (PPPLPPKRRSQ). Positions 556-579 (QPSASAGTVGVGCSSSTSTSNQAS) are enriched in low complexity. Phosphoserine is present on Ser615. Residues 620–631 (ENSQCSFDSALN) show a composition bias toward polar residues. Positions 697–707 (GVAAAASGDGE) are enriched in low complexity. A compositionally biased stretch (polar residues) spans 708–718 (TNSNRHSNESG). Composition is skewed to low complexity over residues 735–747 (SVQS…SSNS) and 780–824 (SSSS…DLAP). The short motif at 820–831 (ADLAPALPPKSI) is the SH3-binding element. A compositionally biased stretch (polar residues) spans 851-866 (VQSSSGWASHRSSQSE). 2 consecutive short sequence motifs (SH3-binding) follow at residues 924–935 (DQEPPPLPIKKK) and 986–997 (LEMPPALPPKNY). The segment at 1013-1038 (PVIVTTPPPSPKPTLGENGSTGRPDS) is disordered. One can recognise an N-terminal Ras-GEF domain in the interval 1170 to 1292 (DGPEVKGGYI…LRNKFVEKVT (123 aa)). Positions 1339 to 1564 (KSLEIAEQMT…WQISEKIKPR (226 aa)) constitute a Ras-GEF domain.

As to expression, ubiquitous.

Guanine nucleotide-releasing protein that binds to SH3 domain of Crk. Transduces signals from Crk to activate RAS. Also involved in MAPK activation. The sequence is that of Guanine nucleotide-releasing factor 2 (C3G) from Drosophila melanogaster (Fruit fly).